The sequence spans 508 residues: Anaerobic nitric oxide reductase transcription regulator NorR (508 aa).

At Asp-56 the chain carries 4-aspartylphosphate. Positions 186–415 (MIGQSPAMAR…LEHAIHRAAV (230 aa)) constitute a Sigma-54 factor interaction domain. ATP is bound by residues 214 to 221 (GETGVGKE) and 277 to 286 (ADQGTLFLDE). The segment at residues 483-502 (WAATARALELDSGNLHRLAK) is a DNA-binding region (H-T-H motif).

It participates in nitrogen metabolism; nitric oxide reduction. In terms of biological role, required for the expression of anaerobic nitric oxide (NO) reductase, acts as a transcriptional activator for at least the norVW operon. Activation also requires sigma-54. The polypeptide is Anaerobic nitric oxide reductase transcription regulator NorR (Aeromonas hydrophila subsp. hydrophila (strain ATCC 7966 / DSM 30187 / BCRC 13018 / CCUG 14551 / JCM 1027 / KCTC 2358 / NCIMB 9240 / NCTC 8049)).